We begin with the raw amino-acid sequence, 195 residues long: UPF0314 protein RL4541 (195 aa).

4 helical membrane passes run 15–35 (FWFV…YMMG), 64–84 (WYTP…HLIL), 127–147 (GDSI…FFFA), and 150–170 (APVA…GYII).

The protein belongs to the UPF0314 family.

The protein localises to the cell membrane. This Rhizobium johnstonii (strain DSM 114642 / LMG 32736 / 3841) (Rhizobium leguminosarum bv. viciae) protein is UPF0314 protein RL4541.